The sequence spans 36 residues: Insecticidal toxin LaIT1 (36 aa).

2 disulfide bridges follow: Cys11-Cys23 and Cys17-Cys29.

As to expression, expressed by the venom gland.

It localises to the secreted. In terms of biological role, affects the activity of both ryanodine-sensitive calcium-release channels RyR1 and RyR2 with high potency. At lower concentrations the toxin increases full openings of the RyRs, and at higher concentrations it inhibits full openings and induce openings to subconductance levels and reduces the number of full conductance openings. The different actions may be attributed to the toxins binding at different sites on the RyRs, with binding at a high-affinity site mediating the increase in full openings and the induction of subconductance states evoked upon binding to a lower-affinity site. Shows insect lethality against crickets and common cutworms (only shows paralysis against cockroaches), but no toxicity is observed in mice. This is Insecticidal toxin LaIT1 from Liocheles australasiae (Dwarf wood scorpion).